Reading from the N-terminus, the 61-residue chain is Small ribosomal subunit protein uS14B (61 aa).

Residues Cys-24, Cys-27, Cys-40, and Cys-43 each coordinate Zn(2+).

It belongs to the universal ribosomal protein uS14 family. Zinc-binding uS14 subfamily. In terms of assembly, part of the 30S ribosomal subunit. Contacts proteins S3 and S10. Zn(2+) serves as cofactor.

In terms of biological role, binds 16S rRNA, required for the assembly of 30S particles and may also be responsible for determining the conformation of the 16S rRNA at the A site. The sequence is that of Small ribosomal subunit protein uS14B from Listeria welshimeri serovar 6b (strain ATCC 35897 / DSM 20650 / CCUG 15529 / CIP 8149 / NCTC 11857 / SLCC 5334 / V8).